We begin with the raw amino-acid sequence, 587 residues long: Serine/threonine-protein phosphatase 2A 65 kDa regulatory subunit A gamma isoform (587 aa).

An N-acetylserine modification is found at Ser2. HEAT repeat units follow at residues 2–42, 44–80, 81–119, 158–194, 197–235, 236–274, 276–313, 314–352, 353–391, 393–430, 432–469, 470–508, 509–547, and 549–586; these read SMVD…ALGE, RTRK…YVGG, VEYA…QMRE, DVLK…AATI, AHLK…LLEP, QDCV…AVGP, PTRT…ILNP, ELAI…VLGK, DATI…VIGI, LLSQ…QLGV, FFDE…EFGP, EWAM…VMGS, EITC…IVDQ, and VVEN…VMMS.

This sequence belongs to the phosphatase 2A regulatory subunit A family. PP2A consists of a common heterodimeric core enzyme, composed of a 36 kDa catalytic subunit (subunit C) and a 65 kDa constant regulatory subunit (subunit A), that associates with a variety of regulatory subunits such as subunits B (the R2/B/PR55/B55, R3/B''/PR72/PR130/PR59 and R5/B'/B56 families). Interacts with CHIP. Interacts with SRK2E/OST1. Post-translationally, ubiquitinated. CHIP-mediated ubiquitination enhances phosphatase activity after an abiotic stress such as low temperature or darkness. As to expression, expressed ubiquitously at stable levels. However, higher protein levels in roots and flowers (at protein level).

The protein resides in the cytoplasm. It localises to the cytosol. The protein localises to the nucleus. Functionally, the A subunit of protein phosphatase 2A serves as a scaffolding molecule to coordinate the assembly of the catalytic subunit and a variable regulatory B subunit. Involved during developmental process such as seedling and floral developments. Seems to act as a negative regulator of PP2A catalytic activity. The protein is Serine/threonine-protein phosphatase 2A 65 kDa regulatory subunit A gamma isoform (PP2AA3) of Arabidopsis thaliana (Mouse-ear cress).